A 485-amino-acid chain; its full sequence is Cysteine--tRNA ligase (485 aa).

C27 is a binding site for Zn(2+). A 'HIGH' region motif is present at residues I29–H39. C208, H233, and E237 together coordinate Zn(2+). The 'KMSKS' region signature appears at K265–S269. K268 lines the ATP pocket.

The protein belongs to the class-I aminoacyl-tRNA synthetase family. Monomer. Requires Zn(2+) as cofactor.

The protein localises to the cytoplasm. The catalysed reaction is tRNA(Cys) + L-cysteine + ATP = L-cysteinyl-tRNA(Cys) + AMP + diphosphate. This is Cysteine--tRNA ligase from Solidesulfovibrio magneticus (strain ATCC 700980 / DSM 13731 / RS-1) (Desulfovibrio magneticus).